A 260-amino-acid chain; its full sequence is Putative methylesterase 19 (260 aa).

S81 acts as the Acyl-ester intermediate in catalysis. Active-site charge relay system residues include D210 and H238.

It belongs to the AB hydrolase superfamily. Methylesterase family.

Functionally, putative methylesterase. This is Putative methylesterase 19 from Arabidopsis thaliana (Mouse-ear cress).